A 92-amino-acid polypeptide reads, in one-letter code: Small ribosomal subunit protein uS19 (92 aa).

Belongs to the universal ribosomal protein uS19 family.

Its function is as follows. Protein S19 forms a complex with S13 that binds strongly to the 16S ribosomal RNA. In Rhodopseudomonas palustris (strain BisA53), this protein is Small ribosomal subunit protein uS19.